A 907-amino-acid polypeptide reads, in one-letter code: Protein translocase subunit SecA (907 aa).

Residues glutamine 87, glycine 105 to threonine 109, and aspartate 512 each bind ATP. The Zn(2+) site is built by cysteine 891, cysteine 893, cysteine 902, and histidine 903.

Belongs to the SecA family. Monomer and homodimer. Part of the essential Sec protein translocation apparatus which comprises SecA, SecYEG and auxiliary proteins SecDF-YajC and YidC. It depends on Zn(2+) as a cofactor.

Its subcellular location is the cell inner membrane. The protein resides in the cytoplasm. The enzyme catalyses ATP + H2O + cellular proteinSide 1 = ADP + phosphate + cellular proteinSide 2.. Its function is as follows. Part of the Sec protein translocase complex. Interacts with the SecYEG preprotein conducting channel. Has a central role in coupling the hydrolysis of ATP to the transfer of proteins into and across the cell membrane, serving both as a receptor for the preprotein-SecB complex and as an ATP-driven molecular motor driving the stepwise translocation of polypeptide chains across the membrane. This is Protein translocase subunit SecA from Tolumonas auensis (strain DSM 9187 / NBRC 110442 / TA 4).